A 183-amino-acid polypeptide reads, in one-letter code: MSENYTPRLKTRYREEIKKALNEEFKYENVMQIPGVTKVVVNMGVGDAARDSKMINGALEDLTAITGQKPQVRRAKKSIANFKLREGMPIGARVTLRGDRMWEFLDRLLTIALPRIRDFRGLSDQQFDGHGNYTFGLSEQTMFYEIDIDKVDRPRGMDITVVTSATNDEEGRKLLRELGFPFK.

Belongs to the universal ribosomal protein uL5 family. As to quaternary structure, part of the 50S ribosomal subunit; part of the 5S rRNA/L5/L18/L25 subcomplex. Contacts the 5S rRNA and the P site tRNA. Forms a bridge to the 30S subunit in the 70S ribosome.

Functionally, this is one of the proteins that bind and probably mediate the attachment of the 5S RNA into the large ribosomal subunit, where it forms part of the central protuberance. In the 70S ribosome it contacts protein S13 of the 30S subunit (bridge B1b), connecting the 2 subunits; this bridge is implicated in subunit movement. Contacts the P site tRNA; the 5S rRNA and some of its associated proteins might help stabilize positioning of ribosome-bound tRNAs. This chain is Large ribosomal subunit protein uL5, found in Corynebacterium aurimucosum (strain ATCC 700975 / DSM 44827 / CIP 107346 / CN-1) (Corynebacterium nigricans).